Consider the following 938-residue polypeptide: AP-2 complex subunit alpha-2 (938 aa).

Residues 11–12 (RG), Lys-43, Tyr-53, and 57–61 (KYVCK) each bind a 1,2-diacyl-sn-glycero-3-phospho-(1D-myo-inositol-3,4,5-trisphosphate). The tract at residues 616 to 677 (LKKKKGPSTV…APPVPAGPPP (62 aa)) is disordered. A compositionally biased stretch (low complexity) spans 645-668 (PALASTSAVSTPSPSADLLGLGAA).

Belongs to the adaptor complexes large subunit family. As to quaternary structure, adaptor protein complex 2 (AP-2) is a heterotetramer composed of two large adaptins (alpha-type subunit AP2A1 or AP2A2 and beta-type subunit AP2B1), a medium adaptin (mu-type subunit AP2M1) and a small adaptin (sigma-type subunit AP2S1). Binds clathrin. Binds EPN1, EPS15, AMPH, SNAP91 and BIN1. Interacts with HIP1. Interacts with DGKD. Interacts with DENND1A, DENND1B and DENND1C. Interacts with FCHO1. Interacts with ATAT1; this interaction is required for efficient alpha-tubulin acetylation by ATAT1. Interacts with KIAA1107. Together with AP2B1 and AP2M1, it interacts with ADAM10; this interaction facilitates ADAM10 endocytosis from the plasma membrane during long-term potentiation in hippocampal neurons. Interacts with CLN3 (via dileucine motif). Interacts with ABCB11; this interaction regulates cell membrane expression of ABCB11 through its internalization in a clathrin-dependent manner and its subsequent degradation. Interacts with DNAJC6.

Its subcellular location is the cell membrane. It localises to the membrane. The protein localises to the coated pit. Component of the adaptor protein complex 2 (AP-2). Adaptor protein complexes function in protein transport via transport vesicles in different membrane traffic pathways. Adaptor protein complexes are vesicle coat components and appear to be involved in cargo selection and vesicle formation. AP-2 is involved in clathrin-dependent endocytosis in which cargo proteins are incorporated into vesicles surrounded by clathrin (clathrin-coated vesicles, CCVs) which are destined for fusion with the early endosome. The clathrin lattice serves as a mechanical scaffold but is itself unable to bind directly to membrane components. Clathrin-associated adaptor protein (AP) complexes which can bind directly to both the clathrin lattice and to the lipid and protein components of membranes are considered to be the major clathrin adaptors contributing the CCV formation. AP-2 also serves as a cargo receptor to selectively sort the membrane proteins involved in receptor-mediated endocytosis. AP-2 seems to play a role in the recycling of synaptic vesicle membranes from the presynaptic surface. AP-2 recognizes Y-X-X-[FILMV] (Y-X-X-Phi) and [ED]-X-X-X-L-[LI] endocytosis signal motifs within the cytosolic tails of transmembrane cargo molecules. AP-2 may also play a role in maintaining normal post-endocytic trafficking through the ARF6-regulated, non-clathrin pathway. During long-term potentiation in hippocampal neurons, AP-2 is responsible for the endocytosis of ADAM10. The AP-2 alpha subunit binds polyphosphoinositide-containing lipids, positioning AP-2 on the membrane. The AP-2 alpha subunit acts via its C-terminal appendage domain as a scaffolding platform for endocytic accessory proteins. The AP-2 alpha and AP-2 sigma subunits are thought to contribute to the recognition of the [ED]-X-X-X-L-[LI] motif. The sequence is that of AP-2 complex subunit alpha-2 from Bos taurus (Bovine).